The primary structure comprises 4047 residues: Cubilin homolog (4047 aa).

Residues methionine 1–serine 22 form the signal peptide. 3 N-linked (GlcNAc...) asparagine glycosylation sites follow: asparagine 56, asparagine 92, and asparagine 127. In terms of domain architecture, EGF-like 1 spans alanine 168–glutamate 205. Intrachain disulfides connect cysteine 172-cysteine 183, cysteine 177-cysteine 193, cysteine 195-cysteine 204, cysteine 211-cysteine 227, cysteine 221-cysteine 236, cysteine 238-cysteine 247, cysteine 310-cysteine 321, cysteine 315-cysteine 330, cysteine 333-cysteine 344, cysteine 350-cysteine 363, cysteine 357-cysteine 372, cysteine 375-cysteine 386, cysteine 392-cysteine 403, cysteine 397-cysteine 418, cysteine 420-cysteine 434, cysteine 442-cysteine 453, cysteine 447-cysteine 463, cysteine 465-cysteine 474, cysteine 480-cysteine 491, cysteine 485-cysteine 500, cysteine 502-cysteine 511, cysteine 518-cysteine 544, cysteine 577-cysteine 601, cysteine 645-cysteine 667, cysteine 696-cysteine 719, and cysteine 769-cysteine 801. An EGF-like 2; calcium-binding domain is found at aspartate 207–glutamine 248. Residues asparagine 215 and asparagine 224 are each glycosylated (N-linked (GlcNAc...) asparagine). The EGF-like 3; calcium-binding domain maps to aspartate 306 to isoleucine 345. Residues aspartate 346–valine 387 enclose the EGF-like 4; calcium-binding domain. 3 consecutive EGF-like domains span residues lysine 388–valine 435, alanine 438–glutamate 475, and lysine 476–glutamate 512. CUB domains are found at residues cysteine 518–valine 641, cysteine 645–threonine 763, cysteine 769–leucine 934, leucine 934–serine 1061, cysteine 1065–valine 1182, cysteine 1188–isoleucine 1300, cysteine 1304–leucine 1427, cysteine 1428–leucine 1558, cysteine 1560–valine 1680, and cysteine 1691–lysine 1841. 3 N-linked (GlcNAc...) asparagine glycosylation sites follow: asparagine 528, asparagine 537, and asparagine 583. N-linked (GlcNAc...) asparagine glycosylation is found at asparagine 775, asparagine 806, and asparagine 811. A disulfide bridge links cysteine 877 with cysteine 896. Asparagine 942 is a glycosylation site (N-linked (GlcNAc...) asparagine). 3 disulfide bridges follow: cysteine 1065–cysteine 1091, cysteine 1120–cysteine 1145, and cysteine 1188–cysteine 1211. Asparagine 1133 carries an N-linked (GlcNAc...) asparagine glycan. An N-linked (GlcNAc...) asparagine glycan is attached at asparagine 1229. Cysteines 1234 and 1262 form a disulfide. A glycan (N-linked (GlcNAc...) asparagine) is linked at asparagine 1294. An intrachain disulfide couples cysteine 1304 to cysteine 1330. Asparagine 1353 carries N-linked (GlcNAc...) asparagine glycosylation. 3 disulfides stabilise this stretch: cysteine 1428/cysteine 1455, cysteine 1488/cysteine 1522, and cysteine 1560/cysteine 1586. N-linked (GlcNAc...) asparagine glycosylation is present at asparagine 1513. 4 N-linked (GlcNAc...) asparagine glycosylation sites follow: asparagine 1613, asparagine 1631, asparagine 1648, and asparagine 1674. Cysteines 1614 and 1641 form a disulfide. A disulfide bond links cysteine 1691 and cysteine 1720. Residues asparagine 1762, asparagine 1782, asparagine 1866, and asparagine 1890 are each glycosylated (N-linked (GlcNAc...) asparagine). A disulfide bridge connects residues cysteine 1955 and cysteine 1979. Residues cysteine 1955–valine 2083 form the CUB 11 domain. Residues asparagine 2005, asparagine 2016, and asparagine 2017 are each glycosylated (N-linked (GlcNAc...) asparagine). Cysteine 2006 and cysteine 2027 are oxidised to a cystine. Residues alanine 2052 to asparagine 2071 are disordered. A compositionally biased stretch (acidic residues) spans glycine 2055–glutamine 2067. A glycan (N-linked (GlcNAc...) asparagine) is linked at asparagine 2193. 2 disulfides stabilise this stretch: cysteine 2207-cysteine 2238 and cysteine 2265-cysteine 2295. CUB domains follow at residues cysteine 2207–threonine 2334, cysteine 2335–glutamine 2463, cysteine 2467–alanine 2588, cysteine 2590–serine 2717, and cysteine 2721–isoleucine 2859. Residues asparagine 2301 and asparagine 2305 are each glycosylated (N-linked (GlcNAc...) asparagine). 2 disulfide bridges follow: cysteine 2335–cysteine 2368 and cysteine 2395–cysteine 2424. N-linked (GlcNAc...) asparagine glycosylation occurs at asparagine 2434. Cystine bridges form between cysteine 2467–cysteine 2498 and cysteine 2590–cysteine 2619. 4 N-linked (GlcNAc...) asparagine glycosylation sites follow: asparagine 2599, asparagine 2645, asparagine 2657, and asparagine 2692. A disulfide bridge connects residues cysteine 2646 and cysteine 2668. Disulfide bonds link cysteine 2721/cysteine 2747 and cysteine 2786/cysteine 2809. Asparagine 2811, asparagine 2845, asparagine 2875, and asparagine 2988 each carry an N-linked (GlcNAc...) asparagine glycan. 4 disulfides stabilise this stretch: cysteine 2996-cysteine 3025, cysteine 3052-cysteine 3074, cysteine 3127-cysteine 3154, and cysteine 3181-cysteine 3217. CUB domains follow at residues cysteine 2996–leucine 3121, cysteine 3127–glutamate 3254, cysteine 3255–asparagine 3385, cysteine 3387–serine 3508, cysteine 3515–valine 3641, cysteine 3645–leucine 3783, and cysteine 3786–valine 3900. N-linked (GlcNAc...) asparagine glycosylation is present at asparagine 3235. 3 cysteine pairs are disulfide-bonded: cysteine 3255/cysteine 3281, cysteine 3315/cysteine 3335, and cysteine 3387/cysteine 3418. 2 N-linked (GlcNAc...) asparagine glycosylation sites follow: asparagine 3421 and asparagine 3461. Disulfide bonds link cysteine 3445-cysteine 3468 and cysteine 3515-cysteine 3544. N-linked (GlcNAc...) asparagine glycosylation occurs at asparagine 3635. 2 disulfide bridges follow: cysteine 3645–cysteine 3680 and cysteine 3708–cysteine 3742. N-linked (GlcNAc...) asparagine glycosylation is found at asparagine 3770, asparagine 3787, asparagine 3812, asparagine 3858, and asparagine 3930. Intrachain disulfides connect cysteine 3786-cysteine 3815 and cysteine 3845-cysteine 3863.

The protein localises to the secreted. Functionally, cotransporter which plays a role in lipoprotein, vitamin and iron metabolism, by facilitating their uptake. The polypeptide is Cubilin homolog (Caenorhabditis elegans).